Consider the following 323-residue polypeptide: Transposase for insertion sequence element IS6120 (323 aa).

Positions 300 to 323 are disordered; that stretch reads ERPTDITPPTSPSDGGQHAGTEVA. Residues 304–313 show a composition bias toward low complexity; the sequence is DITPPTSPSD.

It belongs to the transposase mutator family.

Required for the transposition of the insertion element. This Mycolicibacterium smegmatis (Mycobacterium smegmatis) protein is Transposase for insertion sequence element IS6120.